We begin with the raw amino-acid sequence, 224 residues long: Small ribosomal subunit protein uS5 (224 aa).

Residues 1–38 form a disordered region; it reads MAEQSAGGQGAPEGRDSRDSREGRGRRDGGRGGRDSDK. The segment covering 13-38 has biased composition (basic and acidic residues); that stretch reads EGRDSRDSREGRGRRDGGRGGRDSDK. Residues 41–104 enclose the S5 DRBM domain; that stretch reads YLERVVAINR…EEARKGFFRV (64 aa).

This sequence belongs to the universal ribosomal protein uS5 family. In terms of assembly, part of the 30S ribosomal subunit. Contacts proteins S4 and S8.

In terms of biological role, with S4 and S12 plays an important role in translational accuracy. Located at the back of the 30S subunit body where it stabilizes the conformation of the head with respect to the body. This Mycobacterium ulcerans (strain Agy99) protein is Small ribosomal subunit protein uS5.